Reading from the N-terminus, the 418-residue chain is E3 ubiquitin-protein ligase pellino homolog 1 (418 aa).

The FHA; atypical domain occupies 13–200 (APVKYGELIV…MHPRNGFTED (188 aa)). The residue at position 121 (Ser121) is a Phosphoserine; by ATM. Thr127 bears the Phosphothreonine; by ATM mark. The tract at residues 311-399 (CGHVHGYHNW…TFHAACPFCA (89 aa)) is ring-like domain; necessary for ubiqitination of RIPK3.

Belongs to the pellino family. Interacts with MAP3K7. Upon IL1B treatment, forms a complex with TRAF6, IRAK1, IRAK4 and MYD88; this complex recruits MAP3K7/TAK1, TAB1 and TAB2 to mediate NF-kappa-B activation. Direct binding of SMAD6 to PELI1 prevents the complex formation and hence negatively regulates IL1R-TLR signaling and eventually NF-kappa-B-mediated gene expression. Interacts (via atypical FHA domain) with RIPK3; preferentially binds to the 'Thr-182' phosphorylated form of RIPK3. Interacts with RIPK1 and IRAK1. In terms of processing, phosphorylation by IRAK1 and IRAK4 enhances its E3 ligase activity. Phosphorylated by ATM in response to DNA damage, promoting localization to DNA double-strand breaks (DSBs) and ability to mediate 'Lys-63'-linked ubiquitination of NBN. Post-translationally, sumoylated. Expressed at high levels in normal skin but decreased in keratinocytes from toxic epidermal necrolysis (TEN) patients (at protein level).

The protein localises to the chromosome. The catalysed reaction is S-ubiquitinyl-[E2 ubiquitin-conjugating enzyme]-L-cysteine + [acceptor protein]-L-lysine = [E2 ubiquitin-conjugating enzyme]-L-cysteine + N(6)-ubiquitinyl-[acceptor protein]-L-lysine.. The protein operates within protein modification; protein ubiquitination. Its function is as follows. E3 ubiquitin ligase catalyzing the covalent attachment of ubiquitin moieties onto substrate proteins. Involved in the TLR and IL-1 signaling pathways via interaction with the complex containing IRAK kinases and TRAF6. Acts as a positive regulator of inflammatory response in microglia through activation of NF-kappa-B and MAP kinase. Mediates 'Lys-63'-linked polyubiquitination of IRAK1 allowing subsequent NF-kappa-B activation. Conjugates 'Lys-63'-linked ubiquitin chains to the adapter protein ASC/PYCARD, which in turn is crucial for NLRP3 inflammasome activation. Mediates 'Lys-48'-linked polyubiquitination of RIPK3 leading to its subsequent proteasome-dependent degradation; preferentially recognizes and mediates the degradation of the 'Thr-182' phosphorylated form of RIPK3. Negatively regulates necroptosis by reducing RIPK3 expression. Mediates 'Lys-63'-linked ubiquitination of RIPK1. Following phosphorylation by ATM, catalyzes 'Lys-63'-linked ubiquitination of NBN, promoting DNA repair via homologous recombination. Negatively regulates activation of the metabolic mTORC1 signaling pathway by mediating 'Lys-63'-linked ubiquitination of mTORC1-inhibitory protein TSC1 and thereby promoting TSC1/TSC2 complex stability. In Homo sapiens (Human), this protein is E3 ubiquitin-protein ligase pellino homolog 1.